The sequence spans 262 residues: Virulence regulon transcriptional activator VirF (262 aa).

Positions D161 to Y258 constitute an HTH araC/xylS-type domain. DNA-binding regions (H-T-H motif) lie at residues S178–K199 and I225–Y248.

As to quaternary structure, homodimer.

Its function is as follows. Primary regulator of plasmid-encoded virulence genes. Activates the transcription of icsA (virG) and of virB, which is an activator of the ipaABCD virulence regulon. In Shigella dysenteriae, this protein is Virulence regulon transcriptional activator VirF (virF).